A 302-amino-acid chain; its full sequence is DNA-binding transcriptional activator HetR (302 aa).

The active site involves serine 153.

It belongs to the peptidase S48 family. Homodimer; disulfide-linked.

Its function is as follows. Might be involved in temporal and/or spatial regulation of nitrogen fixation. Dimerization is required for DNA-binding. Has both a protease and a DNA-binding activity. The sequence is that of DNA-binding transcriptional activator HetR from Trichodesmium erythraeum (strain IMS101).